The chain runs to 486 residues: Glycogen synthase (486 aa).

Position 20 (Lys20) interacts with ADP-alpha-D-glucose.

It belongs to the glycosyltransferase 1 family. Bacterial/plant glycogen synthase subfamily.

It catalyses the reaction [(1-&gt;4)-alpha-D-glucosyl](n) + ADP-alpha-D-glucose = [(1-&gt;4)-alpha-D-glucosyl](n+1) + ADP + H(+). It participates in glycan biosynthesis; glycogen biosynthesis. In terms of biological role, synthesizes alpha-1,4-glucan chains using ADP-glucose. This is Glycogen synthase from Aeromonas hydrophila subsp. hydrophila (strain ATCC 7966 / DSM 30187 / BCRC 13018 / CCUG 14551 / JCM 1027 / KCTC 2358 / NCIMB 9240 / NCTC 8049).